Consider the following 78-residue polypeptide: Small ribosomal subunit protein uS15c (78 aa).

Belongs to the universal ribosomal protein uS15 family. Part of the 30S ribosomal subunit.

Its subcellular location is the plastid. The protein resides in the chloroplast. The chain is Small ribosomal subunit protein uS15c (rps15-A) from Saccharum officinarum (Sugarcane).